The chain runs to 277 residues: UPF0276 protein PSEEN3355 (277 aa).

This sequence belongs to the UPF0276 family.

This is UPF0276 protein PSEEN3355 from Pseudomonas entomophila (strain L48).